A 434-amino-acid chain; its full sequence is Cytochrome b-c1 complex subunit 2, mitochondrial (434 aa).

The N-terminal 31 residues, Met-1–Gly-31, are a transit peptide targeting the mitochondrion.

It belongs to the peptidase M16 family. UQCRC2/QCR2 subfamily. Component of the ubiquinol-cytochrome c oxidoreductase (cytochrome b-c1 complex, complex III, CIII), a multisubunit enzyme composed of 10 subunits. The complex is composed of 3 respiratory subunits cytochrome b (COB), cytochrome c1 (CYT1) and Rieske protein (RIP1), 2 core protein subunits COR1 and QCR2, and 5 low-molecular weight protein subunits QCR6, QCR7, QCR8, QCR9 and QCR10. The complex exists as an obligatory dimer and forms supercomplexes (SCs) in the inner mitochondrial membrane with a monomer or a dimer of cytochrome c oxidase (complex IV, CIV), resulting in 2 different assemblies (supercomplexes III(2)IV and III(2)IV(2)). Interacts with MRJ1.

It localises to the mitochondrion inner membrane. Functionally, component of the ubiquinol-cytochrome c oxidoreductase, a multisubunit transmembrane complex that is part of the mitochondrial electron transport chain which drives oxidative phosphorylation. The respiratory chain contains 3 multisubunit complexes succinate dehydrogenase (complex II, CII), ubiquinol-cytochrome c oxidoreductase (cytochrome b-c1 complex, complex III, CIII) and cytochrome c oxidase (complex IV, CIV), that cooperate to transfer electrons derived from NADH and succinate to molecular oxygen, creating an electrochemical gradient over the inner membrane that drives transmembrane transport and the ATP synthase. The cytochrome b-c1 complex catalyzes electron transfer from ubiquinol to cytochrome c, linking this redox reaction to translocation of protons across the mitochondrial inner membrane, with protons being carried across the membrane as hydrogens on the quinol. In the process called Q cycle, 2 protons are consumed from the matrix, 4 protons are released into the intermembrane space and 2 electrons are passed to cytochrome c. The protein is Cytochrome b-c1 complex subunit 2, mitochondrial of Cryptococcus neoformans var. grubii serotype A (strain H99 / ATCC 208821 / CBS 10515 / FGSC 9487) (Filobasidiella neoformans var. grubii).